We begin with the raw amino-acid sequence, 177 residues long: Large ribosomal subunit protein uL10 (177 aa).

This sequence belongs to the universal ribosomal protein uL10 family. Part of the ribosomal stalk of the 50S ribosomal subunit. The N-terminus interacts with L11 and the large rRNA to form the base of the stalk. The C-terminus forms an elongated spine to which L12 dimers bind in a sequential fashion forming a multimeric L10(L12)X complex.

Forms part of the ribosomal stalk, playing a central role in the interaction of the ribosome with GTP-bound translation factors. The sequence is that of Large ribosomal subunit protein uL10 from Legionella pneumophila (strain Paris).